The chain runs to 386 residues: Aspergillopepsin-1 (386 aa).

The signal sequence occupies residues 1–20 (MVVFSKVAAAAFGLSAVASA). The propeptide at 21 to 69 (MPAAPPRQGFTINQLTRAIPKRTINLPAIYANALSKYGGNVPPHIQDAM) is activation peptide. The Peptidase A1 domain maps to 85–383 (YLTPVAVGGT…DSEGPQLGFA (299 aa)). Asp-101 is an active-site residue. Asn-130 carries N-linked (GlcNAc...) asparagine glycosylation. Residue Asp-275 is part of the active site. Residues Cys-311 and Cys-346 are joined by a disulfide bond.

Belongs to the peptidase A1 family. As to quaternary structure, monomer.

The protein localises to the secreted. It catalyses the reaction Hydrolysis of proteins with broad specificity. Generally favors hydrophobic residues in P1 and P1', but also accepts Lys in P1, which leads to activation of trypsinogen. Does not clot milk.. In terms of biological role, secreted aspartic endopeptidase that allows assimilation of proteinaceous substrates. The scissile peptide bond is attacked by a nucleophilic water molecule activated by two aspartic residues in the active site. Shows a broad primary substrate specificity. Favors hydrophobic residues at the P1 and P1' positions, but also accepts a lysine residue in the P1 position, leading to the activation of trypsinogen and chymotrypsinogen A. The chain is Aspergillopepsin-1 from Emericella nidulans (strain FGSC A4 / ATCC 38163 / CBS 112.46 / NRRL 194 / M139) (Aspergillus nidulans).